We begin with the raw amino-acid sequence, 202 residues long: Small ribosomal subunit protein uS4 (202 aa).

Basic residues predominate over residues 1-13 (MSRYRGPRLRVTR). The interval 1–42 (MSRYRGPRLRVTRRLGELPGLTRKASKKSNPPGQHGQARRKR) is disordered. One can recognise an S4 RNA-binding domain in the interval 90–152 (NRLDNVCFRL…KASKKLVEGN (63 aa)).

It belongs to the universal ribosomal protein uS4 family. As to quaternary structure, part of the 30S ribosomal subunit. Contacts protein S5. The interaction surface between S4 and S5 is involved in control of translational fidelity.

Functionally, one of the primary rRNA binding proteins, it binds directly to 16S rRNA where it nucleates assembly of the body of the 30S subunit. In terms of biological role, with S5 and S12 plays an important role in translational accuracy. The sequence is that of Small ribosomal subunit protein uS4 from Prochlorococcus marinus (strain AS9601).